A 433-amino-acid chain; its full sequence is Pseudopaline synthase (433 aa).

Residues 7–27 form a helical membrane-spanning segment; sequence SLGNVLLVGLGAVAIQVALDL. NAD(+) is bound by residues 16-19, 39-40, and Thr-154; these read LGAV and NH. The Proton donor/acceptor role is filled by His-219. Glu-364 is an NAD(+) binding site.

This sequence belongs to the staphylopine dehydrogenase family. As to quaternary structure, homodimer. Interacts with CntL.

It localises to the cell membrane. The enzyme catalyses pseudopaline + NAD(+) + H2O = (2S)-2-amino-4-{[(1S)-1-carboxy-2-(1H-imidazol-4-yl)ethyl]amino}butanoate + 2-oxoglutarate + NADH + H(+). In terms of biological role, catalyzes the NADH-dependent reductive condensation of alpha-ketoglutarate to the intermediate formed by the adjacently encoded enzyme CntL, namely (2S)-2-amino-4-{[(1S)-1-carboxy-2-(1H-imidazol-4-yl)ethyl]amino}butanoate, leading to the production of pseudopaline. This is the last step in the biosynthesis of the metallophore pseudopaline, which is involved in the acquisition of nickel and zinc, and thus enables bacterial growth inside the host, where metal access is limited. Therefore, this enzyme probably contributes to Pseudomonas virulence. Can use neither pyruvate nor NADPH in place of alpha-ketoglutarate and NADH, respectively. The polypeptide is Pseudopaline synthase (Pseudomonas aeruginosa (strain UCBPP-PA14)).